The chain runs to 169 residues: 2-C-methyl-D-erythritol 2,4-cyclodiphosphate synthase (169 aa).

A divalent metal cation-binding residues include Asp-13 and His-15. 4-CDP-2-C-methyl-D-erythritol 2-phosphate contacts are provided by residues 13-15 (DVH) and 39-40 (HS). His-47 is an a divalent metal cation binding site. 4-CDP-2-C-methyl-D-erythritol 2-phosphate-binding positions include 61–63 (DIG), 66–70 (FPDTD), Phe-144, and Arg-147.

It belongs to the IspF family. In terms of assembly, homotrimer. The cofactor is a divalent metal cation.

It catalyses the reaction 4-CDP-2-C-methyl-D-erythritol 2-phosphate = 2-C-methyl-D-erythritol 2,4-cyclic diphosphate + CMP. Its pathway is isoprenoid biosynthesis; isopentenyl diphosphate biosynthesis via DXP pathway; isopentenyl diphosphate from 1-deoxy-D-xylulose 5-phosphate: step 4/6. Functionally, involved in the biosynthesis of isopentenyl diphosphate (IPP) and dimethylallyl diphosphate (DMAPP), two major building blocks of isoprenoid compounds. Catalyzes the conversion of 4-diphosphocytidyl-2-C-methyl-D-erythritol 2-phosphate (CDP-ME2P) to 2-C-methyl-D-erythritol 2,4-cyclodiphosphate (ME-CPP) with a corresponding release of cytidine 5-monophosphate (CMP). This chain is 2-C-methyl-D-erythritol 2,4-cyclodiphosphate synthase, found in Cupriavidus pinatubonensis (strain JMP 134 / LMG 1197) (Cupriavidus necator (strain JMP 134)).